The primary structure comprises 551 residues: ETS domain-containing transcription factor ERF (551 aa).

Phosphothreonine is present on residues Thr-3 and Thr-7. Ser-20 and Ser-24 each carry phosphoserine. A DNA-binding region (ETS) is located at residues 27 to 107; that stretch reads IQLWHFILEL…KGKRFTYKFN (81 aa). 2 disordered regions span residues 130 to 169 and 184 to 304; these read QSAPPVPSGGSHFRFPPSTPSEVLSPTEDPRSPPACSSSS and GSVS…SHFS. Ser-185 and Ser-190 each carry phosphoserine. Residues 239-250 are compositionally biased toward pro residues; the sequence is RGGPEPLSPFPV. A compositionally biased stretch (low complexity) spans 251-268; the sequence is SPLAGPGSLLPPQLSPAL. Residues 289-301 are compositionally biased toward gly residues; sequence SGGGGPSGSGGGS. Residue Ser-327 is modified to Phosphoserine. Residues 342 to 476 form a disordered region; that stretch reads PQRPDKCPLP…KPEPGEAPGV (135 aa). A compositionally biased stretch (pro residues) spans 348-361; sequence CPLPPMAPETPPVP. The segment covering 362 to 373 has biased composition (low complexity); sequence SSASSSSSSSSS. Over residues 404–413 the composition is skewed to gly residues; that stretch reads GGSGSGGLAE. A phosphoserine mark is found at Ser-433 and Ser-437. A compositionally biased stretch (acidic residues) spans 433–453; it reads SEGESEEVEVTDISDEDEEDG. At Thr-443 the chain carries Phosphothreonine. A Phosphoserine modification is found at Ser-446. Residues Lys-467, Lys-483, and Lys-514 each participate in a glycyl lysine isopeptide (Lys-Gly) (interchain with G-Cter in SUMO2) cross-link. A disordered region spans residues 495-551; it reads RLEGGGCLSGGPEDEGEDKKVRGDVGPGESGGPLTPRRVSSDLQHATAQLSLEHRDS. Thr-529 carries the post-translational modification Phosphothreonine; by MAPK1. 3 positions are modified to phosphoserine: Ser-534, Ser-535, and Ser-551. The span at 535-544 shows a compositional bias: polar residues; the sequence is SDLQHATAQL.

It belongs to the ETS family. Post-translationally, phosphorylated by multiple kinases including MAPK1/ERK2 at THR-529. Phosphorylation regulates the activity of ERF. In terms of tissue distribution, expressed along the osteogenic margins of the developing calvarial bones, in a similar distribution to that observed for the master osteogenic regulator RUNX2.

The protein localises to the nucleus. Functionally, potent transcriptional repressor that binds to the H1 element of the Ets2 promoter. May regulate other genes involved in cellular proliferation. Required for extraembryonic ectoderm differentiation, ectoplacental cone cavity closure, and chorioallantoic attachment. May be important for regulating trophoblast stem cell differentiation. This chain is ETS domain-containing transcription factor ERF (Erf), found in Mus musculus (Mouse).